The primary structure comprises 473 residues: UDP-N-acetylmuramate--L-alanine ligase (473 aa).

Residue 115–121 (GTHGKTT) participates in ATP binding.

Belongs to the MurCDEF family.

It localises to the cytoplasm. It carries out the reaction UDP-N-acetyl-alpha-D-muramate + L-alanine + ATP = UDP-N-acetyl-alpha-D-muramoyl-L-alanine + ADP + phosphate + H(+). Its pathway is cell wall biogenesis; peptidoglycan biosynthesis. Its function is as follows. Cell wall formation. The protein is UDP-N-acetylmuramate--L-alanine ligase of Rhizorhabdus wittichii (strain DSM 6014 / CCUG 31198 / JCM 15750 / NBRC 105917 / EY 4224 / RW1) (Sphingomonas wittichii).